We begin with the raw amino-acid sequence, 214 residues long: MTPTPIQNAPQSAVTRQALALAGVFQAAAVVDQLARTGQCDERAWNTLIRATLDTNPDSFATIYGGHHNNLRLGIDTLSAVMNRQHSDPAVMRYGFSLVLLMQKLRKDDAMMASLGERLTRIQGQAEHFGDTHENVIASLGQLYQDTLSTFRYRIVVQGDPSLLQSRMMPERVRAALLTGVRFALLWHQQGGRRWKLLFQRQGIKKSLAALDGH.

The protein belongs to the HflD family.

It is found in the cytoplasm. Its subcellular location is the cell inner membrane. The protein is High frequency lysogenization protein HflD homolog of Chromohalobacter salexigens (strain ATCC BAA-138 / DSM 3043 / CIP 106854 / NCIMB 13768 / 1H11).